The chain runs to 293 residues: Pyridoxal 5'-phosphate synthase subunit PdxS (293 aa).

Asp-23 is a binding site for D-ribose 5-phosphate. The Schiff-base intermediate with D-ribose 5-phosphate role is filled by Lys-80. Gly-152 is a D-ribose 5-phosphate binding site. Arg-164 is a binding site for D-glyceraldehyde 3-phosphate. Residues Gly-213 and 234–235 (GS) contribute to the D-ribose 5-phosphate site.

The protein belongs to the PdxS/SNZ family. As to quaternary structure, in the presence of PdxT, forms a dodecamer of heterodimers.

It catalyses the reaction aldehydo-D-ribose 5-phosphate + D-glyceraldehyde 3-phosphate + L-glutamine = pyridoxal 5'-phosphate + L-glutamate + phosphate + 3 H2O + H(+). It participates in cofactor biosynthesis; pyridoxal 5'-phosphate biosynthesis. Functionally, catalyzes the formation of pyridoxal 5'-phosphate from ribose 5-phosphate (RBP), glyceraldehyde 3-phosphate (G3P) and ammonia. The ammonia is provided by the PdxT subunit. Can also use ribulose 5-phosphate and dihydroxyacetone phosphate as substrates, resulting from enzyme-catalyzed isomerization of RBP and G3P, respectively. This Thermus thermophilus (strain ATCC 27634 / DSM 579 / HB8) protein is Pyridoxal 5'-phosphate synthase subunit PdxS.